Consider the following 130-residue polypeptide: MAGIKALVALSFSGALGLTFLLLGCALEQFGQYWPMFVLIFYILSPIPNLIARRHADDTESSNACRELAYFLTTGIVVSAYGLPVVLARKAVIQWGAAGLVMAGNCVIFLTILGFFLIFGGGDDFSWEQW.

Helical transmembrane passes span 7–27 (LVAL…GCAL), 32–52 (QYWP…NLIA), 68–88 (LAYF…VVLA), and 99–119 (GLVM…FLIF).

The protein belongs to the OB-RGRP/VPS55 family.

It is found in the golgi apparatus membrane. The protein resides in the endosome membrane. In terms of biological role, involved in protein trafficking. May be involved in the down-regulation of membrane protein levels. This Danio rerio (Zebrafish) protein is Leptin receptor gene-related protein (leprot).